Reading from the N-terminus, the 301-residue chain is uncharacterized protein (301 aa).

Glutamate 146, glutamate 148, and aspartate 177 together coordinate a divalent metal cation.

It belongs to the FAH family.

This is an uncharacterized protein from Staphylococcus epidermidis (strain ATCC 12228 / FDA PCI 1200).